Reading from the N-terminus, the 286-residue chain is ATP synthase gamma chain (286 aa).

Belongs to the ATPase gamma chain family. In terms of assembly, F-type ATPases have 2 components, CF(1) - the catalytic core - and CF(0) - the membrane proton channel. CF(1) has five subunits: alpha(3), beta(3), gamma(1), delta(1), epsilon(1). CF(0) has three main subunits: a, b and c.

The protein resides in the cell inner membrane. Functionally, produces ATP from ADP in the presence of a proton gradient across the membrane. The gamma chain is believed to be important in regulating ATPase activity and the flow of protons through the CF(0) complex. In Pseudomonas savastanoi pv. phaseolicola (strain 1448A / Race 6) (Pseudomonas syringae pv. phaseolicola (strain 1448A / Race 6)), this protein is ATP synthase gamma chain.